The following is a 208-amino-acid chain: LexA repressor (208 aa).

The H-T-H motif DNA-binding region spans V28–A48. Residues S130 and K168 each act as for autocatalytic cleavage activity in the active site.

It belongs to the peptidase S24 family. Homodimer.

The enzyme catalyses Hydrolysis of Ala-|-Gly bond in repressor LexA.. In terms of biological role, represses a number of genes involved in the response to DNA damage (SOS response), including recA and lexA. In the presence of single-stranded DNA, RecA interacts with LexA causing an autocatalytic cleavage which disrupts the DNA-binding part of LexA, leading to derepression of the SOS regulon and eventually DNA repair. The protein is LexA repressor of Shouchella clausii (strain KSM-K16) (Alkalihalobacillus clausii).